Here is a 314-residue protein sequence, read N- to C-terminus: Pantothenate synthetase (314 aa).

43–50 is an ATP binding site; sequence MGALHEGH. The active-site Proton donor is His-50. Gln-75 is a binding site for (R)-pantoate. Beta-alanine is bound at residue Gln-75. Residues 112-131 are disordered; the sequence is MYPDGTRTSVHPGPLGDDLE. Position 161 to 164 (161 to 164) interacts with ATP; the sequence is GEKD. Gln-167 contacts (R)-pantoate. Residues Val-190 and 198–201 each bind ATP; that span reads LSSR.

Belongs to the pantothenate synthetase family. As to quaternary structure, homodimer.

It is found in the cytoplasm. It catalyses the reaction (R)-pantoate + beta-alanine + ATP = (R)-pantothenate + AMP + diphosphate + H(+). The protein operates within cofactor biosynthesis; (R)-pantothenate biosynthesis; (R)-pantothenate from (R)-pantoate and beta-alanine: step 1/1. Functionally, catalyzes the condensation of pantoate with beta-alanine in an ATP-dependent reaction via a pantoyl-adenylate intermediate. The polypeptide is Pantothenate synthetase (Mycolicibacterium smegmatis (strain ATCC 700084 / mc(2)155) (Mycobacterium smegmatis)).